We begin with the raw amino-acid sequence, 302 residues long: tRNA-cytidine(32) 2-sulfurtransferase (302 aa).

The short motif at 45–50 (SGGKDS) is the PP-loop motif element. 3 residues coordinate [4Fe-4S] cluster: C120, C123, and C211.

Belongs to the TtcA family. In terms of assembly, homodimer. The cofactor is Mg(2+). [4Fe-4S] cluster is required as a cofactor.

It localises to the cytoplasm. It catalyses the reaction cytidine(32) in tRNA + S-sulfanyl-L-cysteinyl-[cysteine desulfurase] + AH2 + ATP = 2-thiocytidine(32) in tRNA + L-cysteinyl-[cysteine desulfurase] + A + AMP + diphosphate + H(+). It functions in the pathway tRNA modification. Functionally, catalyzes the ATP-dependent 2-thiolation of cytidine in position 32 of tRNA, to form 2-thiocytidine (s(2)C32). The sulfur atoms are provided by the cysteine/cysteine desulfurase (IscS) system. This is tRNA-cytidine(32) 2-sulfurtransferase from Aeromonas hydrophila subsp. hydrophila (strain ATCC 7966 / DSM 30187 / BCRC 13018 / CCUG 14551 / JCM 1027 / KCTC 2358 / NCIMB 9240 / NCTC 8049).